Here is a 761-residue protein sequence, read N- to C-terminus: Neutral ceramidase (761 aa).

The Cytoplasmic segment spans residues 1–11 (MAKRTFSSLEA). The chain crosses the membrane as a helical; Signal-anchor for type II membrane protein span at residues 12 to 32 (FLIFLLVMMTAITVALLTLLF). Residues 33-761 (VTSGTIENHK…ISSPFEIVTT (729 aa)) lie on the Lumenal side of the membrane. Residues 43–76 (DSGNHWVSTTQGPTTTQSSPTTQTPTTQTPDLPP) are disordered. Residues 50-76 (STTQGPTTTQSSPTTQTPTTQTPDLPP) are compositionally biased toward low complexity. O-linked (GalNAc...) threonine glycans are attached at residues threonine 51, threonine 52, threonine 56, threonine 57, and threonine 58. 2 O-linked (GalNAc...) serine glycosylation sites follow: serine 60 and serine 61. O-linked (GalNAc...) threonine glycosylation is found at threonine 63, threonine 64, threonine 66, threonine 68, threonine 69, and threonine 71. Leucine 115 contributes to the Ca(2+) binding site. Histidine 175 lines the Zn(2+) pocket. N-linked (GlcNAc...) asparagine glycosylation is present at asparagine 198. A Zn(2+)-binding site is contributed by histidine 284. The active-site Nucleophile is the serine 335. 2 disulfide bridges follow: cysteine 343–cysteine 357 and cysteine 350–cysteine 365. N-linked (GlcNAc...) asparagine glycans are attached at residues asparagine 412 and asparagine 449. A disulfide bond links cysteine 429 and cysteine 479. Zn(2+) contacts are provided by glutamate 521 and tyrosine 560. Ca(2+) contacts are provided by aspartate 693, serine 695, and threonine 698. Residues 751 to 761 (GISSPFEIVTT) form a required for correct folding and localization region.

It belongs to the neutral ceramidase family. Requires Zn(2+) as cofactor. Proteolytic cleavage of the N-terminus removes the signal-anchor and produces a soluble form of the protein. In terms of processing, N-glycosylated. Required for enzyme activity. Post-translationally, O-glycosylated. Required to retain it as a type II membrane protein at the cell surface. Phosphorylated. May prevent ubiquitination and subsequent degradation. In terms of processing, ubiquitinated, leading to its degradation by the proteasome. Ubiquitination is triggered by nitric oxide. In terms of tissue distribution, highly expressed in brain, kidney and heart. Expressed at lower level in other tissues such as liver. Expressed in intestine, kidney and liver (at protein level). Localizes in the epithelia of the jejunum and ileum.

The protein resides in the cell membrane. It is found in the membrane raft. The protein localises to the membrane. It localises to the caveola. Its subcellular location is the golgi apparatus membrane. The protein resides in the mitochondrion. It is found in the secreted. The protein localises to the extracellular exosome. The enzyme catalyses an N-acylsphing-4-enine + H2O = sphing-4-enine + a fatty acid. It catalyses the reaction N-hexadecanoylsphing-4-enine + H2O = sphing-4-enine + hexadecanoate. It carries out the reaction N-tetradecanoylsphing-4-enine + H2O = tetradecanoate + sphing-4-enine. The catalysed reaction is N-(9Z-octadecenoyl)-sphing-4-enine + H2O = sphing-4-enine + (9Z)-octadecenoate. The enzyme catalyses N-(15Z-tetracosenoyl)-sphing-4-enine + H2O = (15Z)-tetracosenoate + sphing-4-enine. It catalyses the reaction N-octanoylsphing-4-enine + H2O = octanoate + sphing-4-enine. It carries out the reaction N-dodecanoylsphing-4-enine + H2O = dodecanoate + sphing-4-enine. The catalysed reaction is N-(hexanoyl)sphing-4-enine + H2O = hexanoate + sphing-4-enine. The enzyme catalyses N-octadecanoylsphing-4-enine + H2O = sphing-4-enine + octadecanoate. It catalyses the reaction sphinganine + hexadecanoate = N-hexadecanoylsphinganine + H2O. It carries out the reaction N-(octadecanoyl)-sphinganine + H2O = sphinganine + octadecanoate. It functions in the pathway lipid metabolism; sphingolipid metabolism. Its activity is regulated as follows. The reverse reaction is inhibited by Zn(2+) and Cu(2+). Inhibited by cardiolipin and phosphatidic acid. In terms of biological role, plasma membrane ceramidase that hydrolyzes sphingolipid ceramides into sphingosine and free fatty acids at neutral pH. Ceramides, sphingosine, and its phosphorylated form sphingosine-1-phosphate are bioactive lipids that mediate cellular signaling pathways regulating several biological processes including cell proliferation, apoptosis and differentiation. Also catalyzes the reverse reaction allowing the synthesis of ceramides from fatty acids and sphingosine. Together with sphingomyelinase, participates in the production of sphingosine and sphingosine-1-phosphate from the degradation of sphingomyelin, a sphingolipid enriched in the plasma membrane of cells. Also participates in the hydrolysis of ceramides from the extracellular milieu allowing the production of sphingosine-1-phosphate inside and outside cells. This is the case for instance with the digestion of dietary sphingolipids in the intestinal tract. This Rattus norvegicus (Rat) protein is Neutral ceramidase (Asah2).